Reading from the N-terminus, the 142-residue chain is Large ribosomal subunit protein uL13 (142 aa).

Belongs to the universal ribosomal protein uL13 family. Part of the 50S ribosomal subunit.

This protein is one of the early assembly proteins of the 50S ribosomal subunit, although it is not seen to bind rRNA by itself. It is important during the early stages of 50S assembly. The polypeptide is Large ribosomal subunit protein uL13 (Haemophilus influenzae (strain PittGG)).